The following is a 382-amino-acid chain: Proton extrusion protein PxcA (382 aa).

4 helical membrane passes run 162–182, 257–277, 305–325, and 340–360; these read VLLL…TYLI, AIKN…VCLM, IILF…SVLL, and FVNL…KYWI.

The protein belongs to the CemA family.

Its subcellular location is the cell inner membrane. In terms of biological role, required for H(+) efflux immediately after light irradiation to form a rapid H(+) concentration gradient across the thylakoid membranes. Together with PxcL, contributes to transient H(+) uptake following dark to light transition. The chain is Proton extrusion protein PxcA from Synechococcus sp. (strain CC9605).